We begin with the raw amino-acid sequence, 844 residues long: DNA mismatch repair protein MutS (844 aa).

Position 602 to 609 (602 to 609 (GPNMSGKS)) interacts with ATP.

Belongs to the DNA mismatch repair MutS family.

In terms of biological role, this protein is involved in the repair of mismatches in DNA. It is possible that it carries out the mismatch recognition step. This protein has a weak ATPase activity. In Streptococcus pneumoniae serotype 19F (strain G54), this protein is DNA mismatch repair protein MutS.